The chain runs to 176 residues: Magnesium-dependent phosphatase 1 (176 aa).

Asp11 functions as the Nucleophile in the catalytic mechanism. A Mg(2+)-binding site is contributed by Asp11. Residues Leu12 and Asp13 each contribute to the phosphate site. Asp13 serves as a coordination point for Mg(2+). Asp13 acts as the Proton donor in catalysis. Residue Trp20 participates in substrate binding. Positions 69, 70, and 100 each coordinate phosphate. Arg70 serves as a coordination point for substrate. Asp123 serves as a coordination point for Mg(2+).

This sequence belongs to the HAD-like hydrolase superfamily. Requires Mg(2+) as cofactor.

The catalysed reaction is O-phospho-L-tyrosyl-[protein] + H2O = L-tyrosyl-[protein] + phosphate. With respect to regulation, inhibited by vanadate and zinc, and slightly by calcium. Functionally, magnesium-dependent phosphatase which may act as a tyrosine phosphatase. This is Magnesium-dependent phosphatase 1 (MDP1) from Homo sapiens (Human).